The sequence spans 105 residues: Large ribosomal subunit protein eL42z/eL42y (105 aa).

Positions tyrosine 28 to valine 57 are disordered.

Belongs to the eukaryotic ribosomal protein eL42 family.

The polypeptide is Large ribosomal subunit protein eL42z/eL42y (RPL36AA) (Arabidopsis thaliana (Mouse-ear cress)).